The primary structure comprises 337 residues: Palmitoyltransferase ZDHHC15 (337 aa).

The Cytoplasmic portion of the chain corresponds to 1–20 (MRRGWKMALSGGLRCCRRVL). A helical transmembrane segment spans residues 21–41 (SWVPVLVIVLVVLWSYYAYVF). Residues 42–56 (ELCLVTVLSPAEKVI) are Lumenal-facing. Residues 57–77 (YLILYHAIFVFFAWTYWKSIF) form a helical membrane-spanning segment. Topologically, residues 78–172 (TLPQQPNQKF…NNCIGFSNYK (95 aa)) are cytoplasmic. One can recognise a DHHC domain in the interval 129–179 (RFCDRCHLIKPDRCHHCSVCAMCVLKMDHHCPWVNNCIGFSNYKFFLQFLA). Positions 131, 134, 144, 145, 148, 151, and 158 each coordinate Zn(2+). Catalysis depends on C159, which acts as the S-palmitoyl cysteine intermediate. Position 165 (C165) interacts with Zn(2+). The helical transmembrane segment at 173–193 (FFLQFLAYSVLYCLYIATTVF) threads the bilayer. Residues 194–210 (SYFIKYWRGELPSVRSK) are Lumenal-facing. A helical membrane pass occupies residues 211–234 (FHVLFLLFVACMFFVSLVILFGYH). Topologically, residues 235-337 (CWLVSRNKTT…LSSLAVESET (103 aa)) are cytoplasmic. The segment at 293–337 (HSFPMRSMNESQNPLLANEEPWEDNEDESQDYPEGLSSLAVESET) is disordered. Over residues 312 to 323 (EPWEDNEDESQD) the composition is skewed to acidic residues.

This sequence belongs to the DHHC palmitoyltransferase family. Autopalmitoylated (in vitro). In brain, expressed in both excitatory and inhibitory neurons but not expressed by glial cells.

The protein localises to the golgi apparatus membrane. It is found in the postsynaptic density. It catalyses the reaction L-cysteinyl-[protein] + hexadecanoyl-CoA = S-hexadecanoyl-L-cysteinyl-[protein] + CoA. The enzyme catalyses L-cysteinyl-[protein] + tetradecanoyl-CoA = S-tetradecanoyl-L-cysteinyl-[protein] + CoA. It carries out the reaction L-cysteinyl-[protein] + octadecanoyl-CoA = S-octadecanoyl-L-cysteinyl-[protein] + CoA. Palmitoyltransferase that catalyzes the addition of palmitate onto various protein substrates. Has no stringent fatty acid selectivity and in addition to palmitate can also transfer onto target proteins myristate from tetradecanoyl-CoA and stearate from octadecanoyl-CoA. Palmitoylates IGF2R and SORT1, promoting their partitioning to an endosomal membrane subdomain where they can interact with the retromer cargo-selective complex. Thereby, regulates retrograde transport from endosomes to the Golgi apparatus of these lysosomal sorting receptors and plays a role in trafficking of lysosomal proteins. In the nervous system, catalyzes the palmitoylation of DLG4/PSD95 and regulates its synaptic clustering and function in synaptogenesis. Could be involved in the differentiation of dopaminergic neurons and the development of the diencephalon. Could also catalyze the palmitoylation of GAP43. Could also palmitoylate DNAJC5 and regulate its localization to the Golgi membrane. Could also palmitoylate FYN as shown in vitro. May palmitoylate CALHM3 subunit of gustatory voltage-gated ion channels and modulate channel gating and kinetics. The sequence is that of Palmitoyltransferase ZDHHC15 from Rattus norvegicus (Rat).